Here is an 84-residue protein sequence, read N- to C-terminus: Small ribosomal subunit protein bS18B (84 aa).

Basic residues predominate over residues 1–10 (MAVKRAPSKK). Positions 1–20 (MAVKRAPSKKVRAEQARRPK) are disordered.

Belongs to the bacterial ribosomal protein bS18 family. In terms of assembly, part of the 30S ribosomal subunit. Forms a tight heterodimer with protein bS6.

Functionally, binds as a heterodimer with protein bS6 to the central domain of the 16S rRNA, where it helps stabilize the platform of the 30S subunit. The chain is Small ribosomal subunit protein bS18B from Nocardia farcinica (strain IFM 10152).